We begin with the raw amino-acid sequence, 117 residues long: MAKSARSKSIRRNKKVLRENVFQPVIDERTKRLSAHLRDQVNDLTKSSSSKEEGIADNSLKEVSSSEVSDNVGMEVDQPKVSTSGPRDNNRNKWAKKHLKKGKRAKNSNFSKFLKKK.

Positions 39–117 are disordered; the sequence is DQVNDLTKSS…SNFSKFLKKK (79 aa). A compositionally biased stretch (basic residues) spans 93 to 106; that stretch reads KWAKKHLKKGKRAK. Low complexity predominate over residues 107–117; sequence NSNFSKFLKKK.

This sequence belongs to the UPF0642 family.

Its subcellular location is the nucleus. The protein resides in the nucleolus. This chain is UPF0642 protein C32H8.05, found in Schizosaccharomyces pombe (strain 972 / ATCC 24843) (Fission yeast).